The sequence spans 232 residues: MAKISKRVAKGREGIDRNRFYPLDEAVKVIKERATAKFDETIEVAMNLGVDPRHADQMVRGVVNLPNGTGRSVRVAVFAKGDKADEAKAAGADIVGAEDLVETVQKGEINFDRCIATPDMMPLVGRLGKVLGPRGLMPNPKVGTVTTDVAAAVKASKGGAVEFRVEKAGIVHAGVGKVSFDENAIAENVRAFADAVIKAKPSGAKGNYLKRVSITSTMGPGLKIDPSTLAAS.

It belongs to the universal ribosomal protein uL1 family. In terms of assembly, part of the 50S ribosomal subunit.

Functionally, binds directly to 23S rRNA. The L1 stalk is quite mobile in the ribosome, and is involved in E site tRNA release. In terms of biological role, protein L1 is also a translational repressor protein, it controls the translation of the L11 operon by binding to its mRNA. In Chelativorans sp. (strain BNC1), this protein is Large ribosomal subunit protein uL1.